Reading from the N-terminus, the 176-residue chain is Prepronociceptin (176 aa).

The signal sequence occupies residues 1–19; that stretch reads MKILFCDLLLLSLFSSVSS. Propeptides lie at residues 20 to 95 and 169 to 176; these read SCQK…MQHL and TLHQNGNA.

The protein belongs to the opioid neuropeptide precursor family. Specific enzymatic cleavages at paired basic residues probably yield other active peptides besides nociceptin. In terms of processing, the N-terminal domain contains 6 conserved cysteines thought to be involved in disulfide bonding and/or processing.

It localises to the secreted. Ligand of the opioid receptor-like receptor OPRL1. It may act as a transmitter in the brain by modulating nociceptive and locomotor behavior. May be involved in neuronal differentiation and development. Functionally, blocks nociceptin action in pain transmission by inhibiting nociceptin-induced hyperalgesia and allodynia. Its function is as follows. Has potent analgesic activity. This Bos taurus (Bovine) protein is Prepronociceptin (PNOC).